Here is a 234-residue protein sequence, read N- to C-terminus: Isoprenyl transferase (234 aa).

Asp13 is a catalytic residue. Asp13 lines the Mg(2+) pocket. Substrate is bound by residues 14–17, Trp18, Arg26, His30, and 58–60; these read GNGR and STE. Residue Asn61 is the Proton acceptor of the active site. Substrate contacts are provided by residues Trp62, Arg64, Arg180, and 186–188; that span reads RLS. Glu199 is a Mg(2+) binding site.

It belongs to the UPP synthase family. Homodimer. Mg(2+) serves as cofactor.

Its function is as follows. Catalyzes the condensation of isopentenyl diphosphate (IPP) with allylic pyrophosphates generating different type of terpenoids. This chain is Isoprenyl transferase, found in Helicobacter pylori (strain J99 / ATCC 700824) (Campylobacter pylori J99).